A 390-amino-acid chain; its full sequence is MRYLTAGESHGPQLTTIIEGVPAGLYITEEDINFELARRQKGHGRGRRMQIEKDQAKIMSGVRHARTLGSPIALVVENNDWKHWTKIMGAAPITEDEEKEMKRQISRPRPGHADLNGAIKYNHRDMRNVLERSSARETTVRVAAGAVAKKILSELGIKVAGHVLQIGAVKAEKTEYTSIEDLQRVTEESPVRCYDEEAGKKMMAAIDEAKANGDSIGGIVEVIVEGMPVGVGSYVHYDRKLDSKLAAAVLSINAFKGVEFGIGFEAAGRNGSEVHDEIIWDEEKGYTRATNRLGGLEGGMTTGMPIVVRGVMKPIPTLYKPLKSVDIETKEPFSASIERSDSCAVPAASVVAEAAVAWEIANAVVEQFGLDQIDRIRENVENMRKLSREF.

NADP(+) contacts are provided by Arg-39 and Arg-45. FMN-binding positions include 132 to 134, 253 to 254, Gly-298, 313 to 317, and Arg-339; these read RSS, NA, and KPIPT.

Belongs to the chorismate synthase family. In terms of assembly, homotetramer. FMNH2 serves as cofactor.

The enzyme catalyses 5-O-(1-carboxyvinyl)-3-phosphoshikimate = chorismate + phosphate. It participates in metabolic intermediate biosynthesis; chorismate biosynthesis; chorismate from D-erythrose 4-phosphate and phosphoenolpyruvate: step 7/7. Functionally, catalyzes the anti-1,4-elimination of the C-3 phosphate and the C-6 proR hydrogen from 5-enolpyruvylshikimate-3-phosphate (EPSP) to yield chorismate, which is the branch point compound that serves as the starting substrate for the three terminal pathways of aromatic amino acid biosynthesis. This reaction introduces a second double bond into the aromatic ring system. This is Chorismate synthase from Bacillus subtilis (strain 168).